The sequence spans 275 residues: Low affinity immunoglobulin gamma Fc region receptor III-A (275 aa).

Residues 1 to 23 (MSVWTSRKAAEDNDTSLSSGIRA) form the signal peptide. At 24–207 (GLQKAVVTLH…SPSTFPPWHQ (184 aa)) the chain is on the extracellular side. Ig-like C2-type domains are found at residues 28-92 (AVVT…YTCQ) and 101-192 (PVNL…LRIT). 2 disulfides stabilise this stretch: Cys-49-Cys-91 and Cys-131-Cys-175. N-linked (GlcNAc...) asparagine glycosylation is found at Asn-65, Asn-168, and Asn-183. Residues 208–228 (ITFCLLIGLLFTIDTVMYFSV) form a helical membrane-spanning segment. Over 229-275 (QKGLRRSTADYEEPEVHWSKEPENKTISEEKQSFRSSRANSETPENR) the chain is Cytoplasmic. The tract at residues 237-275 (ADYEEPEVHWSKEPENKTISEEKQSFRSSRANSETPENR) is disordered. At Tyr-239 the chain carries Phosphotyrosine. Basic and acidic residues predominate over residues 242–261 (PEVHWSKEPENKTISEEKQS). A compositionally biased stretch (polar residues) spans 262–275 (FRSSRANSETPENR).

In terms of assembly, forms a heterooligomeric complex with ITAM-containing signaling subunits FCER1G. Interacts (via transmembrane domain) with signaling subunits; this interaction is a prerequisite for receptor complex expression on the cell surface and intracellular signal transduction. Binds the Fc region of antigen-complexed IgG. N-glycosylated. In terms of processing, phosphorylated following receptor ligation.

The protein resides in the cell membrane. Functionally, receptor for the invariable Fc fragment of immunoglobulin gamma (IgG). Binds with intermediate affinity to both IgG2a and IgG2b. Can bind to IgG2a and IgG2b monomers. Does not display binding to IgG1 or IgG3. Recognizes neutralizing virus-specific IgGs displayed on the cell surface of infected cells and triggers antibody-dependent cellular cytotoxicity (ADCC). Confers protection to lethal influenza virus infection. On splenic dendritic cells, uptakes antigen immune complexes and efficiently divert them into MHC class I and II antigen presentation pathways to provide for superior priming of CD4-positive and CD8-positive T cell immune responses. Mediates neutrophil activation by IgG complexes redundantly with FCGR2A. Plays a role in promoting bone resorption by enhancing osteoclast differentiation following binding to IgG2a. Also acts as a receptor for the Fc region of immunoglobulin epsilon (IgE). Binds with low affinity to both the a and b allotypes of IgE. Has also been shown to bind to IgE allotype a only but not to allotype b. Binds aggregated IgE but not the monomeric form and bound monomeric IgG is readily displaced by IgE complexes. Binding to IgE promotes macrophage-mediated phagocytosis, antigen presentation to T cells, production of pro-inflammatory cytokines and the late phase of cutaneous allergic reactions. Mediates enhanced ADCC in response to afucosylated IgGs. The chain is Low affinity immunoglobulin gamma Fc region receptor III-A from Cricetulus griseus (Chinese hamster).